We begin with the raw amino-acid sequence, 91 residues long: Large ribosomal subunit protein uL23c (91 aa).

This sequence belongs to the universal ribosomal protein uL23 family. In terms of assembly, part of the 50S ribosomal subunit.

The protein localises to the plastid. The protein resides in the chloroplast. In terms of biological role, binds to 23S rRNA. In Anthoceros angustus (Hornwort), this protein is Large ribosomal subunit protein uL23c (rpl23).